The primary structure comprises 176 residues: Sigma intracellular receptor 2 (176 aa).

The Cytoplasmic portion of the chain corresponds to 1 to 9; it reads MGALAARRC. The helical transmembrane segment at 10–30 threads the bilayer; it reads VEWLLGLYFVSHIPITLFIDL. One can recognise an EXPERA domain in the interval 10 to 158; the sequence is VEWLLGLYFV…PYLIIPLILL (149 aa). The Lumenal segment spans residues 31-68; sequence QAVLPPELYPQEFSNLLRWYSKEFKDPLMQEPPVWFKS. Residues 69 to 89 form a helical membrane-spanning segment; that stretch reads FLLCELVFQLPFFPIAAYAFF. 2 residues coordinate cholesterol: Val75 and Gln77. At 90 to 99 the chain is on the cytoplasmic side; sequence KGSCRWIRIP. The helical transmembrane segment at 100-120 threads the bilayer; the sequence is AIIYAAHTITTLIPILYTLLF. Residues 121 to 140 lie on the Lumenal side of the membrane; that stretch reads EDFSKAVAFKGQRPESFRER. Residues 141–161 traverse the membrane as a helical segment; sequence LTLVGVYAPYLIIPLILLLFM. The Cytoplasmic portion of the chain corresponds to 162–176; the sequence is LRNPYYKYEEKRKKK. Residues 172–176 carry the ER retention motif motif; the sequence is KRKKK.

Belongs to the TMEM97/sigma-2 receptor family. In terms of assembly, homodimer. Interacts with NPC1; the interaction impairs NPC1-mediated cholesterol transport. Interacts with PGRMC1 and LDLR; the interaction increases LDL internalization. Interacts with histatin 1/HTN1; the interaction induces HTN1-stimulating wound healing. Interacts with TSPO.

It is found in the rough endoplasmic reticulum membrane. The protein resides in the nucleus membrane. Sigma-2 receptor which contributes to ameliorate dysfunctional cellular processes and slow degenerative progression by regulating cell functions including cholesterol biosynthesis/trafficking, membrane trafficking, autophagy, lipid membrane-bound protein trafficking, and receptor stabilization at the cell surface. Forms a ternary complex with PGRMC1 receptor and low density lipoprotein receptor/LDLR at the plasma membrane, which increases LDLR-mediated LDL cholesterol internalization. Decreases lysosomal sterol transporter NPC1 availability to the cell, probably through NPC1-binding, hence controlling lipid transport, including cholesterol and LBPA, outside of late endosome/lysosome. Binds regio- and stereoselective ligand 20(S)-hydroxycholesterol (20(S)-OHC) which enhances TMEM97-NPC1 interaction and decreases TMEM97-PGRMC1 and TMEM97-TSPO interactions, thereby linking OHC binding to cholesterol homeostasis. Also able to bind cholesterol. Binds histatin 1 (Hst 1)/HN1 salivary peptide at the ER membrane, which is critical for increasing mitochondria-ER contacts and stimulating Hst1 wound healing properties. May alter the activity of some cytochrome P450 proteins. Although shows homologies with sterol isomerases (EXPERA domain), not able to catalyze sterol isomerization. However, may act as sensors of these molecules. Acts as a quality control factor in the ER, promoting the proteolytic degradation of nonproductive and extramitochondrial precursor proteins in the ER membrane thus removing them from the ER surface. In Mus musculus (Mouse), this protein is Sigma intracellular receptor 2.